The following is a 564-amino-acid chain: Beta-N-acetylglucosaminidase/beta-glucosidase (564 aa).

The active-site Nucleophile is aspartate 283.

It belongs to the glycosyl hydrolase 3 family.

The enzyme catalyses Hydrolysis of terminal non-reducing N-acetyl-D-hexosamine residues in N-acetyl-beta-D-hexosaminides.. The catalysed reaction is Hydrolysis of terminal, non-reducing beta-D-glucosyl residues with release of beta-D-glucose.. Its function is as follows. Catalyzes the cleavage of beta-N-acetyl-D-glucosaminides and beta-D-glucosides. Might be involved in the degradation of glucuronic acid-containing glycosaminoglycans such as hyaluronic acid. The sequence is that of Beta-N-acetylglucosaminidase/beta-glucosidase (nag3) from Cellulomonas fimi.